Reading from the N-terminus, the 507-residue chain is F-box only protein 31 (507 aa).

Residues 19-42 (RQQRRGPAETAAADSEADTDPEEE) form a disordered region. Position 33 is a phosphoserine (serine 33). Acidic residues predominate over residues 33–42 (SEADTDPEEE). The residue at position 37 (threonine 37) is a Phosphothreonine. Residues 50 to 55 (RCSLLE) carry the D box motif. Positions 50 to 96 (RCSLLELPPELLVEIFASLPGTDLPSLAQVCSRFRRILHTDTIWRRR) constitute an F-box domain. Zn(2+) contacts are provided by cysteine 192, histidine 200, cysteine 216, and histidine 222. At serine 264 the chain carries Phosphoserine; by ATM. The DDL motif motif lies at 283–285 (DDL). The segment at 364–421 (RQEQEAGEGPAPHREPAVKDPEGPPAKASKEAGPGAEAAEQSSTSGQGQPFVLPAGVS) is disordered. Over residues 374-385 (APHREPAVKDPE) the composition is skewed to basic and acidic residues. Serine 448 is modified (phosphoserine).

Belongs to the FBXO31 family. As to quaternary structure, part of a SCF (SKP1-cullin-F-box) protein ligase complex SCF(FBXO31) composed of CUL1, SKP1, RBX1 and FBXO31. Interacts (when phosphorylated at Ser-33) with CDC20, promoting ubiquitination by the APC/C complex. Post-translationally, phosphorylation at Ser-264 by ATM following gamma-irradiation results in its stabilization. Phosphorylation at Ser-448 in absence of stress promotes its ubiquitination and degradation by the SCF(FBXO46) complex. Phosphorylation at Ser-33 by AKT1 promotes association with CDC20 and ubiquitination by the APC/C complex. Ubiquitinated by the SCF(FBXO46) complex in absence of stress, promoting its degradation. Ubiquitinated by the APC/C complex following phosphorylation at Ser-33, leading to its degradation by the proteasome.

The protein localises to the cytoplasm. It localises to the cytoskeleton. The protein resides in the microtubule organizing center. Its subcellular location is the centrosome. It participates in protein modification; protein ubiquitination. In terms of biological role, substrate-recognition component of the SCF(FBXO31) protein ligase complex, which specifically mediates the ubiquitination of proteins amidated at their C-terminus in response to oxidative stress, leading to their degradation by the proteasome. FBXO31 specifically recognizes and binds C-terminal peptides bearing an amide: C-terminal amidation in response to oxidative stress takes place following protein fragmentation. The SCF(FBXO31) also plays a role in G1 arrest following DNA damage by mediating ubiquitination of phosphorylated cyclin-D1 (CCND1), promoting its degradation by the proteasome, resulting in G1 arrest. The SCF(FBXO31) complex is however not a major regulator of CCND1 stability during the G1/S transition. In response to genotoxic stress, the SCF(FBXO31) complex directs ubiquitination and degradation of phosphorylated MDM2, thereby promoting p53/TP53-mediated DNA damage response. SCF(FBXO31) complex is required for genomic integrity by catalyzing ubiquitination and degradation of cyclin-A (CCNA1 and/or CCNA2) during the G1 phase. In response to genotoxic stress, the SCF(FBXO31) complex directs ubiquitination and degradation of phosphorylated FBXO46 and MAP2K6. SCF(FBXO31) complex promotes ubiquitination and degradation of CDT1 during the G2 phase to prevent re-replication. The SCF(FBXO31) complex also mediates ubiquitination and degradation of DUSP6, OGT and PARD6A. The chain is F-box only protein 31 from Rattus norvegicus (Rat).